Consider the following 227-residue polypeptide: Thymidylate kinase (227 aa).

Residue 7–14 (GIEGSGKT) participates in ATP binding.

This sequence belongs to the thymidylate kinase family.

The catalysed reaction is dTMP + ATP = dTDP + ADP. Functionally, phosphorylation of dTMP to form dTDP in both de novo and salvage pathways of dTTP synthesis. This Desulforapulum autotrophicum (strain ATCC 43914 / DSM 3382 / VKM B-1955 / HRM2) (Desulfobacterium autotrophicum) protein is Thymidylate kinase.